A 254-amino-acid polypeptide reads, in one-letter code: Very-long-chain (3R)-3-hydroxyacyl-CoA dehydratase 2 (254 aa).

Alanine 2 is modified (N-acetylalanine). The Cytoplasmic portion of the chain corresponds to alanine 2–tyrosine 41. Positions lysine 11–glycine 33 are disordered. Positions glycine 12–glycine 21 are enriched in gly residues. The chain crosses the membrane as a helical span at residues leucine 42–leucine 60. The Lumenal portion of the chain corresponds to valine 61–lysine 79. A helical membrane pass occupies residues proline 80–isoleucine 97. At glycine 98–threonine 107 the chain is on the cytoplasmic side. Residues serine 108 to valine 125 form a helical membrane-spanning segment. The Lumenal portion of the chain corresponds to lysine 126 to serine 130. A helical transmembrane segment spans residues glutamate 131–isoleucine 146. Over isoleucine 147 to tyrosine 169 the chain is Cytoplasmic. A helical membrane pass occupies residues threonine 170–isoleucine 187. Active-site residues include tyrosine 176 and glutamate 183. Topologically, residues tyrosine 188–phenylalanine 217 are lumenal. A may be involved in interaction with TECR region spans residues glycine 198 to tyrosine 214. The N-linked (GlcNAc...) asparagine glycan is linked to asparagine 209. A helical transmembrane segment spans residues leucine 218 to histidine 235. At methionine 236–glutamate 254 the chain is on the cytoplasmic side.

This sequence belongs to the very long-chain fatty acids dehydratase HACD family. May interact with enzymes of the ELO family (including ELOVL1); with those enzymes that mediate condensation, the first of the four steps of the reaction cycle responsible for fatty acids elongation, may be part of a larger fatty acids elongase complex. Interacts with BCAP31. Interacts (via the third lumenal loop) with TECR. Highly expressed in testis, spleen, prostate, colon and heart, followed by moderate expression in thymus, ovary, small intestine, peripheral blood leukocytes, liver, skeletal muscle and pancreas. Weakly detected in kidney, placenta, brain and lung.

The protein localises to the endoplasmic reticulum membrane. It carries out the reaction a very-long-chain (3R)-3-hydroxyacyl-CoA = a very-long-chain (2E)-enoyl-CoA + H2O. It catalyses the reaction (3R)-hydroxyhexadecanoyl-CoA = (2E)-hexadecenoyl-CoA + H2O. The catalysed reaction is (3R)-hydroxyoctadecanoyl-CoA = (2E)-octadecenoyl-CoA + H2O. The enzyme catalyses (3R)-hydroxyeicosanoyl-CoA = (2E)-eicosenoyl-CoA + H2O. It carries out the reaction (3R)-hydroxydocosanoyl-CoA = (2E)-docosenoyl-CoA + H2O. It catalyses the reaction (3R)-hydroxytetracosanoyl-CoA = (2E)-tetracosenoyl-CoA + H2O. The catalysed reaction is (3R)-hydroxyhexacosanoyl-CoA = (2E)-hexacosenoyl-CoA + H2O. Its pathway is lipid metabolism; fatty acid biosynthesis. In terms of biological role, catalyzes the third of the very long-chain fatty acids (VLCFA) elongation four-step cycle (condensation, reduction, dehydration, and reduction). This endoplasmic reticulum-elongation process is characterized by the addition of two carbons to the lipid chain through each cycle. This enzyme catalyzes the dehydration of the 3-hydroxyacyl-CoA intermediate into trans-2,3-enoyl-CoA, within each cycle of elongation. Therefore, it participates in the production of various VLCFAs involved in multiple biological processes as precursors of membrane lipids and lipid mediators. This Homo sapiens (Human) protein is Very-long-chain (3R)-3-hydroxyacyl-CoA dehydratase 2.